Consider the following 159-residue polypeptide: G-protein-signaling modulator 3 (159 aa).

A disordered region spans residues 1–54; the sequence is MEAERPQEEDGEQSLPQDDQGWPPVNATARPWRSAPPSPPPPGTRHTALGPRSG. Residues serine 34, serine 38, serine 55, and serine 58 each carry the phosphoserine modification. A compositionally biased stretch (pro residues) spans 34-43; sequence SAPPSPPPPG. Threonine 61 is subject to Phosphothreonine. Positions 61–83 constitute a GoLoco 1 domain; that stretch reads TELLLDLVAEAQSRRLEEQRATF. The disordered stretch occupies residues 77–97; the sequence is EEQRATFHTPEAPPNLAPAPP. A compositionally biased stretch (pro residues) spans 87 to 97; it reads EAPPNLAPAPP. GoLoco domains lie at 103–125 and 131–154; these read KEQL…RSDP and GQEL…RSRP.

It is found in the cytoplasm. Interacts with subunit of G(i) alpha proteins and regulates the activation of G(i) alpha proteins. The polypeptide is G-protein-signaling modulator 3 (Gpsm3) (Mus musculus (Mouse)).